A 362-amino-acid chain; its full sequence is Anthranilate phosphoribosyltransferase (362 aa).

Residues glycine 96, 99-100, threonine 104, 106-109, 124-132, and glycine 136 each bind 5-phospho-alpha-D-ribose 1-diphosphate; these read GD, NIST, and KHGNRAASS. Residue glycine 96 participates in anthranilate binding. Mg(2+) is bound at residue serine 108. Asparagine 127 contributes to the anthranilate binding site. Anthranilate is bound at residue arginine 182. Residues aspartate 240 and glutamate 241 each coordinate Mg(2+).

The protein belongs to the anthranilate phosphoribosyltransferase family. Homodimer. Mg(2+) serves as cofactor.

The catalysed reaction is N-(5-phospho-beta-D-ribosyl)anthranilate + diphosphate = 5-phospho-alpha-D-ribose 1-diphosphate + anthranilate. Its pathway is amino-acid biosynthesis; L-tryptophan biosynthesis; L-tryptophan from chorismate: step 2/5. In terms of biological role, catalyzes the transfer of the phosphoribosyl group of 5-phosphorylribose-1-pyrophosphate (PRPP) to anthranilate to yield N-(5'-phosphoribosyl)-anthranilate (PRA). The protein is Anthranilate phosphoribosyltransferase of Rhodococcus jostii (strain RHA1).